The sequence spans 286 residues: E3 ubiquitin-protein ligase RNF170 (286 aa).

Over 1-52 (MQRYWRFQDNKIQDICFGVLGESWIQRPVMARYYSEGQSLQQDDSFIEGVSD) the chain is Lumenal. Residues 53–73 (QVLVAVVVSLALTATLLYALL) traverse the membrane as a helical segment. Topologically, residues 74–229 (RNVQQNIHPE…GGLFWMFRIR (156 aa)) are cytoplasmic. The segment at 115-158 (CPICLHQASFPVETNCGHLFCGSCIIAYWRYGSWLGAISCPICR) adopts an RING-type zinc-finger fold. The chain crosses the membrane as a helical span at residues 230–250 (IMLCLMGAFFYLISPLDFVPE). Position 251 (alanine 251) is a topological domain, lumenal. The helical transmembrane segment at 252 to 272 (LFGILGFLDDFFVIFLLLIYI) threads the bilayer. The Cytoplasmic portion of the chain corresponds to 273-286 (SIMYREVITQRLTR).

As to quaternary structure, constitutively associated with the ERLIN1/ERLIN 2 complex. Interacts with activated ITPR1.

The protein resides in the endoplasmic reticulum membrane. The enzyme catalyses S-ubiquitinyl-[E2 ubiquitin-conjugating enzyme]-L-cysteine + [acceptor protein]-L-lysine = [E2 ubiquitin-conjugating enzyme]-L-cysteine + N(6)-ubiquitinyl-[acceptor protein]-L-lysine.. The protein operates within protein modification; protein ubiquitination. Functionally, E3 ubiquitin-protein ligase that plays an essential role in stimulus-induced inositol 1,4,5-trisphosphate receptor type 1 (ITPR1) ubiquitination and degradation via the endoplasmic reticulum-associated degradation (ERAD) pathway. Also involved in ITPR1 turnover in resting cells. Selectively inhibits the TLR3-triggered innate immune response by promoting the 'Lys-48'-linked polyubiquitination and degradation of TLR3. This is E3 ubiquitin-protein ligase RNF170 (Rnf170) from Mus musculus (Mouse).